The chain runs to 345 residues: MTVQGKKITVHDMTLRDGMHPKRHLMTLEQMKNIATGLDEAGVPLIEVTHGDGLGGSSVNYGFPAHSDEEYLGAVIPLMKQAKISALLLPGIGTVEHLHMAKDLGVHTIRVATHCTEADVSEQHITAARKLDMDTVGFLMMAHMASPEKLITQAKLMEGYGANCIYVTDSAGYMLPGDVKLRLEAVRAALRPETELGFHGHHNLAMGVANSVAAVEAGANRIDAAAAGLGAGAGNTPMEVFIAVCDRMGIETGVDVFKIQDVAEDRVVPIMDHIIRVDRDSLTLGYAGVYSSFLLFAKRAEKKYGVSARDILVEMGRRKMVGGQEDMIEDTAITMARERAGCAAA.

One can recognise a Pyruvate carboxyltransferase domain in the interval 8-260; sequence ITVHDMTLRD…ETGVDVFKIQ (253 aa). Position 16–17 (16–17) interacts with substrate; sequence RD. Asp-17 contributes to the Mn(2+) binding site. Residue His-20 is the Proton acceptor of the active site. Residues Ser-170 and His-199 each contribute to the substrate site. Mn(2+)-binding residues include His-199 and His-201. Substrate is bound at residue Tyr-290.

The protein belongs to the 4-hydroxy-2-oxovalerate aldolase family.

The catalysed reaction is (S)-4-hydroxy-2-oxopentanoate = acetaldehyde + pyruvate. The polypeptide is 4-hydroxy-2-oxovalerate aldolase (Leptothrix cholodnii (strain ATCC 51168 / LMG 8142 / SP-6) (Leptothrix discophora (strain SP-6))).